Here is a 185-residue protein sequence, read N- to C-terminus: Thiol:disulfide interchange protein DsbE (185 aa).

At 1 to 4 (MKRN) the chain is on the cytoplasmic side. Residues 5 to 25 (VLLLPLLIFLLIAAALLWQLA) form a helical membrane-spanning segment. Topologically, residues 26-185 (RNAQGDDPTN…WDRYSREAAQ (160 aa)) are periplasmic. In terms of domain architecture, Thioredoxin spans 39-177 (ALTGKPVPAF…WESELKPLWD (139 aa)). Cysteines 80 and 83 form a disulfide.

This sequence belongs to the thioredoxin family. DsbE subfamily.

The protein localises to the cell inner membrane. In terms of biological role, involved in disulfide bond formation. Catalyzes a late, reductive step in the assembly of periplasmic c-type cytochromes, probably the reduction of disulfide bonds of the apocytochrome c to allow covalent linkage with the heme. Possible subunit of a heme lyase. The chain is Thiol:disulfide interchange protein DsbE (dsbE1) from Salmonella typhi.